The primary structure comprises 284 residues: Non-selective voltage-gated ion channel VDAC3 (284 aa).

At cysteine 2 the chain carries N-acetylcysteine. At threonine 4 the chain carries Phosphothreonine. N6-acetyllysine is present on residues lysine 12, lysine 15, and lysine 20. The next 2 beta stranded transmembrane spans lie at 26 to 35 (MVKIDLKTKS) and 39 to 48 (VMEFSTSGHA). A Glycyl lysine isopeptide (Lys-Gly) (interchain with G-Cter in ubiquitin) cross-link involves residue lysine 54. 3 beta stranded membrane-spanning segments follow: residues 55–65 (ASGNLETKYKV), 70–77 (LTFTQKWN), and 81–90 (TLGTEISWEN). N6-acetyllysine is present on lysine 91. The beta stranded transmembrane segment at 96–105 (LKLTLDTIFV) threads the bilayer. Glycyl lysine isopeptide (Lys-Gly) (interchain with G-Cter in ubiquitin) cross-links involve residues lysine 110 and lysine 111. The next 10 membrane-spanning stretches (beta stranded) occupy residues 112-121 (SGKLKASYKR), 124-131 (FSVGSNVD), 138-146 (TIYGWAVLA), 151-159 (LAGYQMSFD), 164-176 (KLSQ…GYKA), 179-186 (FQLHTHVN), 190-199 (EFGGSIYQKV), 203-212 (IETSINLAWT), 219-228 (RFGIAAKYML), and 232-239 (TSLSAKVN). Serine 242 bears the Phosphoserine mark. Residues 243 to 245 (LIG) and 261 to 265 (SALID) each bind NAD(+). 2 consecutive transmembrane segments (beta stranded) span residues 243–252 (LIGLGYTQTL) and 255–264 (GVKLTLSALI). Lysine 267 is modified (N6-acetyllysine; alternate). Lysine 267 participates in a covalent cross-link: Glycyl lysine isopeptide (Lys-Gly) (interchain with G-Cter in ubiquitin); alternate. A beta stranded transmembrane segment spans residues 274–283 (HKVGLGFELE).

This sequence belongs to the eukaryotic mitochondrial porin family. Interacts with ARMC12 in a TBC1D21-dependent manner. Interacts with MISFA. In terms of processing, ubiquitinated by PRKN during mitophagy, leading to its degradation and enhancement of mitophagy. Deubiquitinated by USP30.

The protein localises to the mitochondrion outer membrane. It is found in the membrane. It catalyses the reaction chloride(in) = chloride(out). The enzyme catalyses K(+)(in) = K(+)(out). In terms of biological role, non-selective voltage-gated ion channel that mediates the transport of anions and cations through the mitochondrion outer membrane and plasma membrane. Forms a high-conducting channel with a stable open state and a voltage-induced closure with a mild preference for anions over cations. Involved in male fertility and sperm mitochondrial sheath formation. The chain is Non-selective voltage-gated ion channel VDAC3 from Pongo abelii (Sumatran orangutan).